Here is a 99-residue protein sequence, read N- to C-terminus: NADH-quinone oxidoreductase subunit K (99 aa).

Helical transmembrane passes span proline 3–leucine 23, isoleucine 28–phenylalanine 48, and valine 59–isoleucine 79.

Belongs to the complex I subunit 4L family. In terms of assembly, NDH-1 is composed of 14 different subunits. Subunits NuoA, H, J, K, L, M, N constitute the membrane sector of the complex.

Its subcellular location is the cell membrane. The catalysed reaction is a quinone + NADH + 5 H(+)(in) = a quinol + NAD(+) + 4 H(+)(out). NDH-1 shuttles electrons from NADH, via FMN and iron-sulfur (Fe-S) centers, to quinones in the respiratory chain. The immediate electron acceptor for the enzyme in this species is believed to be a menaquinone. Couples the redox reaction to proton translocation (for every two electrons transferred, four hydrogen ions are translocated across the cytoplasmic membrane), and thus conserves the redox energy in a proton gradient. The protein is NADH-quinone oxidoreductase subunit K of Mycolicibacterium vanbaalenii (strain DSM 7251 / JCM 13017 / BCRC 16820 / KCTC 9966 / NRRL B-24157 / PYR-1) (Mycobacterium vanbaalenii).